A 371-amino-acid polypeptide reads, in one-letter code: MALETFVNSEPFTFGVELEIQVVNTHNYDLTKAASDLMRLIQGETFPGNITPEITESMIELSTGICHSHEQAVSELHAIRDVLVKAADQLNVGLCGGGTHAFQQWSDRQIYDAPRFQYISELYGYLAKQFTVFGQHVHIGCPDPDSALFLLHSMSRFIPHFIALSASSPFVQNVDTGFHSARLNSVFAFPLSGRAPFVLTWDSFEEYFTKMVNTGVVNSMKDFYWDIRPKPGYGTIEVRVMDTPLSVDRAAAIACYIQTLARYLLTDRPLKLSEDDYLVYTFNRFEACRFGLEGTCVNPQTGERRTIAEDILDTLDRIAPHAAALGSRAALDEIGALAKARVNDASWLRTVFKQEKSLNETVRQQCLRWRE.

The protein belongs to the glutamate--cysteine ligase type 2 family. YbdK subfamily.

It catalyses the reaction L-cysteine + L-glutamate + ATP = gamma-L-glutamyl-L-cysteine + ADP + phosphate + H(+). In terms of biological role, ATP-dependent carboxylate-amine ligase which exhibits weak glutamate--cysteine ligase activity. This is Putative glutamate--cysteine ligase 2 from Burkholderia ambifaria (strain MC40-6).